Here is a 504-residue protein sequence, read N- to C-terminus: Deoxyguanosinetriphosphate triphosphohydrolase (504 aa).

The 208-residue stretch at 66–273 (RLTHSMEVQQ…MEAADDISYC (208 aa)) folds into the HD domain.

Belongs to the dGTPase family. Type 1 subfamily. Homotetramer. Mg(2+) serves as cofactor.

The enzyme catalyses dGTP + H2O = 2'-deoxyguanosine + triphosphate + H(+). DGTPase preferentially hydrolyzes dGTP over the other canonical NTPs. The protein is Deoxyguanosinetriphosphate triphosphohydrolase of Enterobacter sp. (strain 638).